Reading from the N-terminus, the 314-residue chain is Elongator complex protein 5 (314 aa).

It belongs to the ELP5 family. As to quaternary structure, component of the elongator complex.

The protein resides in the cytoplasm. It localises to the nucleus. The protein operates within tRNA modification; 5-methoxycarbonylmethyl-2-thiouridine-tRNA biosynthesis. Functionally, component of the elongator complex, a multiprotein complex which is required for multiple tRNA modifications, including mcm5U (5-methoxycarbonylmethyl uridine), mcm5s2U (5-methoxycarbonylmethyl-2-thiouridine), and ncm5U (5-carbamoylmethyl uridine). The elongator complex catalyzes formation of carboxymethyluridine in the wobble base at position 34 in tRNAs. The protein is Elongator complex protein 5 (iki1) of Schizosaccharomyces pombe (strain 972 / ATCC 24843) (Fission yeast).